The primary structure comprises 438 residues: C4-dicarboxylate transport protein 1 (438 aa).

A run of 8 helical transmembrane segments spans residues leucine 20–alanine 42, leucine 57–isoleucine 77, alanine 90–valine 112, valine 160–lysine 179, alanine 192–methionine 214, leucine 229–isoleucine 251, leucine 324–alanine 346, and phenylalanine 361–phenylalanine 383.

It belongs to the dicarboxylate/amino acid:cation symporter (DAACS) (TC 2.A.23) family.

It is found in the cell inner membrane. Responsible for the transport of dicarboxylates such as succinate, fumarate, and malate from the periplasm across the membrane. In Bradyrhizobium diazoefficiens (strain JCM 10833 / BCRC 13528 / IAM 13628 / NBRC 14792 / USDA 110), this protein is C4-dicarboxylate transport protein 1.